A 359-amino-acid polypeptide reads, in one-letter code: Type-1 angiotensin II receptor (359 aa).

The Extracellular segment spans residues 1–25 (MILNSSTEDGIKRIQDDCPKAGRHN). Residue Asn4 is glycosylated (N-linked (GlcNAc...) asparagine). Residues Gln15 and Asp17 each coordinate angiotensin II. Disulfide bonds link Cys18-Cys274 and Cys101-Cys180. The chain crosses the membrane as a helical span at residues 26–55 (YIFIMIPTLYSIIFVVGIFGNSLVVIVIYF). The Cytoplasmic portion of the chain corresponds to 56–61 (YMKLKT). The chain crosses the membrane as a helical span at residues 62-89 (VASVFLLNLALADLCFLLTLPLWAVYTA). Residues 90–98 (MEYRWPFGN) are Extracellular-facing. Residues 99–125 (YLCKIASASVSFNLYASVFLLTCLSID) form a helical membrane-spanning segment. Over 126-141 (RYLAIVHPMKSRLRRT) the chain is Cytoplasmic. Residues 142 to 165 (MLVAKVTCIIIWLLAGLASLPTII) traverse the membrane as a helical segment. The Extracellular segment spans residues 166-190 (HRNVFFIENTNITVCAFHYESQNST). Residue Arg167 coordinates angiotensin II. Asn176 carries an N-linked (GlcNAc...) asparagine glycan. Phe182, His183, and Tyr184 together coordinate angiotensin II. A glycan (N-linked (GlcNAc...) asparagine) is linked at Asn188. The chain crosses the membrane as a helical span at residues 191–216 (LPVGLGLTKNILGFLFPFLIILTSYT). Lys199 is an angiotensin II binding site. Residues 217–239 (LIWKTLKKAYEIQKNKPRKDDIF) lie on the Cytoplasmic side of the membrane. A helical membrane pass occupies residues 240-268 (KIILAIVLFFFFSWVPHQIFTFMDVLIQL). Topologically, residues 269–278 (GLIRDCKIED) are extracellular. A helical membrane pass occupies residues 279 to 304 (IVDTAMPITICLAYFNNCLNPLFYGF). Over 305 to 359 (LGKKFKKYFLQLLKYIPPKAKSHSNLSTKMSTLSYRPSENGNSSTKKPAPCIEVE) the chain is Cytoplasmic. A compositionally biased stretch (polar residues) spans 336–350 (TLSYRPSENGNSSTK). The interval 336-359 (TLSYRPSENGNSSTKKPAPCIEVE) is disordered. Cys355 carries the S-palmitoyl cysteine lipid modification.

It belongs to the G-protein coupled receptor 1 family. Interacts with MAS1. Interacts with ARRB1. Interacts with FLNA (via filamin repeat 21); increases PKA-mediated phosphorylation of FLNA. C-terminal Ser or Thr residues may be phosphorylated. As to expression, adrenal medulla, cortex and kidney.

Its subcellular location is the cell membrane. Its function is as follows. Receptor for angiotensin II, a vasoconstricting peptide, which acts as a key regulator of blood pressure and sodium retention by the kidney. The activated receptor in turn couples to G-alpha proteins G(q) (GNAQ, GNA11, GNA14 or GNA15) and thus activates phospholipase C and increases the cytosolic Ca(2+) concentrations, which in turn triggers cellular responses such as stimulation of protein kinase C. This is Type-1 angiotensin II receptor (AGTR1) from Bos taurus (Bovine).